The primary structure comprises 344 residues: Methionine import ATP-binding protein MetN 1 (344 aa).

An ABC transporter domain is found at 2–241 (IEIRNISQRF…PHHEVTRALI (240 aa)). 38–45 (GRSGAGKS) provides a ligand contact to ATP.

It belongs to the ABC transporter superfamily. Methionine importer (TC 3.A.1.24) family. In terms of assembly, the complex is composed of two ATP-binding proteins (MetN), two transmembrane proteins (MetI) and a solute-binding protein (MetQ).

The protein localises to the cell inner membrane. It catalyses the reaction L-methionine(out) + ATP + H2O = L-methionine(in) + ADP + phosphate + H(+). The catalysed reaction is D-methionine(out) + ATP + H2O = D-methionine(in) + ADP + phosphate + H(+). Its function is as follows. Part of the ABC transporter complex MetNIQ involved in methionine import. Responsible for energy coupling to the transport system. The protein is Methionine import ATP-binding protein MetN 1 of Paraburkholderia xenovorans (strain LB400).